A 455-amino-acid chain; its full sequence is Probable Xaa-Pro aminopeptidase GSTUM_00008071001 (455 aa).

Residues Asp-251, Asp-262, Glu-386, and Glu-426 each coordinate Mn(2+).

Belongs to the peptidase M24B family. Mn(2+) is required as a cofactor.

It carries out the reaction Release of any N-terminal amino acid, including proline, that is linked to proline, even from a dipeptide or tripeptide.. In terms of biological role, catalyzes the removal of a penultimate prolyl residue from the N-termini of peptides. The sequence is that of Probable Xaa-Pro aminopeptidase GSTUM_00008071001 from Tuber melanosporum (strain Mel28) (Perigord black truffle).